We begin with the raw amino-acid sequence, 429 residues long: Enolase (429 aa).

Gln-163 contributes to the (2R)-2-phosphoglycerate binding site. The active-site Proton donor is Glu-205. Mg(2+) is bound by residues Asp-242, Glu-286, and Asp-313. Residues Lys-338, Arg-367, Ser-368, and Lys-389 each coordinate (2R)-2-phosphoglycerate. The active-site Proton acceptor is the Lys-338.

It belongs to the enolase family. Mg(2+) serves as cofactor.

The protein localises to the cytoplasm. It is found in the secreted. It localises to the cell surface. The catalysed reaction is (2R)-2-phosphoglycerate = phosphoenolpyruvate + H2O. It participates in carbohydrate degradation; glycolysis; pyruvate from D-glyceraldehyde 3-phosphate: step 4/5. Its function is as follows. Catalyzes the reversible conversion of 2-phosphoglycerate (2-PG) into phosphoenolpyruvate (PEP). It is essential for the degradation of carbohydrates via glycolysis. The sequence is that of Enolase from Citrifermentans bemidjiense (strain ATCC BAA-1014 / DSM 16622 / JCM 12645 / Bem) (Geobacter bemidjiensis).